The chain runs to 39 residues: Omega-theraphotoxin-Ba1b (39 aa).

3 disulfide bridges follow: C4–C17, C8–C31, and C25–C36.

The protein belongs to the neurotoxin 12 (Hwtx-2) family. 06 (TXP1) subfamily. Expressed by the venom gland.

The protein localises to the secreted. Its function is as follows. Inhibits voltage-gated calcium channels (Cav) in rat cerebellar granule cells. Has insecticidal activity to crickets (Acheta domesticus). Is not toxic to mice. This chain is Omega-theraphotoxin-Ba1b, found in Brachypelma albiceps (Mexican golden redrump tarantula).